We begin with the raw amino-acid sequence, 902 residues long: Phosphoenolpyruvate carboxylase (902 aa).

Residue His-132 is part of the active site. Residues 327–346 form a disordered region; sequence DALERPEKTAGKKSSKRTPY. The active site involves Lys-561.

The protein belongs to the PEPCase type 1 family. It depends on Mg(2+) as a cofactor.

The catalysed reaction is oxaloacetate + phosphate = phosphoenolpyruvate + hydrogencarbonate. Forms oxaloacetate, a four-carbon dicarboxylic acid source for the tricarboxylic acid cycle. The polypeptide is Phosphoenolpyruvate carboxylase (Corynebacterium diphtheriae (strain ATCC 700971 / NCTC 13129 / Biotype gravis)).